We begin with the raw amino-acid sequence, 238 residues long: Ribosomal RNA small subunit methyltransferase G (238 aa).

S-adenosyl-L-methionine-binding positions include Gly77, Phe82, 128-129 (AE), and Arg147.

The protein belongs to the methyltransferase superfamily. RNA methyltransferase RsmG family.

The protein localises to the cytoplasm. Functionally, specifically methylates the N7 position of guanine in position 535 of 16S rRNA. The chain is Ribosomal RNA small subunit methyltransferase G from Geobacillus kaustophilus (strain HTA426).